The sequence spans 357 residues: U3 small nucleolar ribonucleoprotein protein LCP5 (357 aa).

S2 is subject to N-acetylserine. 2 disordered regions span residues 146 to 211 (STLV…YKPP) and 301 to 357 (NKAE…QRRL). The span at 155 to 166 (DDSEDDESSEDE) shows a compositional bias: acidic residues. A compositionally biased stretch (polar residues) spans 171–183 (PNTSGIINTNKKS). Composition is skewed to basic and acidic residues over residues 187–196 (RVEETAKQEN) and 348–357 (SAWDRAQRRL).

It localises to the nucleus. The protein resides in the nucleolus. Component of the U3 small nucleolar ribonucleoprotein. Required for the early cleavages at sites A0, A1 and A2 of the pre-ribosomal RNA. Participates in ribosome biogenesis. This chain is U3 small nucleolar ribonucleoprotein protein LCP5 (LCP5), found in Saccharomyces cerevisiae (strain ATCC 204508 / S288c) (Baker's yeast).